We begin with the raw amino-acid sequence, 1412 residues long: MRIEVMIKGNSKEICIPLIKETTLEDIRELSEVEVYDISSGLNAYAILKNSTVCLEYSSKLYEMYIAIFLKMLDDTATSKEIMSDMGGMEPYSLLEVGLINAFIEALIWRVEQGEVVGRYEAFVEDLCRKMSSNLLCEIVSWKQEEDIMNTKFDYLLLSLRLIVMMVEYKTKEEGEIEKKSTFAFAKEYFYKAFALLGETKDLEDDMAFVFRASLTIDALVTRQVAGRISEVFPIVEDLPISKKNMFGIYIQMAEVCMSEDGALNDLLYSVFTTSCLVSLDTGYGNEFVEVLIAMVEQDGGSGGKRIGNVMETFRMIFHSLQDSESRGRERLIWNFLSFLSRIRMGRDMGDLNSIFLKFIVKYPETIELYSNFILINKIDFPLHTLHGISSFGFMKRFYSVLFNKVRKERHDKAHVDKLISEFLKFFLATKNKELIGILPLVPYIPSKREVLYVLYEIYSFLFEKEVIEHVGLFLLKTPALVGISSSIYYNVRYLRHLATRLSLVDVEPRMVVFLGIVYYCESKKLYNFNYTGILEYIQDEDGIRMSRDGLVGVIELIHSGYISRSHEFTLSYVNSLLTIALKPKTIETTLVIIEIILRRILEKEEKIIFMKGIHQRFQELFVLLSSKRFLSDEVSDSYRRLYRSIVERIKCAPNFYNYVVLCLADISFFDGEFPRGHFKSFNDLYNHTLSRMGVVEGFPDIFMVDHGWSCSENTDKAVSGPFLHRVCGSGKEEETKPRETKSHNMYDIIRTGTNDSVMSLESSTGSISLHSSAPMPSISRKAWLEMLDEGIRKREKSVSWLIDVIYTRRSQSSTIRTVLDLLKLRLRNKFEYEDLYILLKAYNILSIRENDSEEFLKHALHRGLDFKTDPAICYKLSMETNGFYRFFFRALHLAVSNLPCNEDLSFPERTQLVSRFDTADLVHIQNTFKQKMVQKLLERSRSPSYRTYFFNVDSLGVIDSLTIIRRLDDPSLVSRAFERLRESKNEMLFYVPQLVQMLRYKKVFEMAFSTLKELAKDEYVAHQLIWNLKANLYVDGRAAVNNYHGTFVRCIEEIMKEMPDGSRDIFLKEEEFISSLTKISSELTPHLRSSKDEKRRRINEYLSRIKLHPGIYIPFYPDLKIIEIVNGSARALQSHSKVPFMASFRVQDPGGQISIKQLIFKSGDDCRQDMLALQIISMFESIFKQANLDIFLYPYKVMATSSGTGIIEVIPNSKSRDQIGKENINNLLEYFEYKFGFKESEGYLTAICNFASSLAGYSLVGYFLNIKDRHNGNIMIDDQGRMIHIDFGYMLEMSPGNLNIEAPLKLTKEIEELLGGTSGKGFEIYQELMVKGFLALRRRSKDLVMMVDSFVDSELPCYRRNAVENFILRFRFELSDKNARRFVLSLIAESSQKFRTWMYDQYQKITNNIAF.

One can recognise a PIK helical domain in the interval 878–1055 (SMETNGFYRF…GTFVRCIEEI (178 aa)). Positions 1056–1163 (MKEMPDGSRD…ISIKQLIFKS (108 aa)) are pleckstrin homology (PH) domain conferring phosphoinositide binding specificity. In terms of domain architecture, PI3K/PI4K catalytic spans 1127–1396 (NGSARALQSH…LIAESSQKFR (270 aa)). Residues 1133–1139 (LQSHSKV) form a G-loop region. The tract at residues 1266 to 1274 (NIKDRHNGN) is catalytic loop. Positions 1285–1308 (HIDFGYMLEMSPGNLNIEAPLKLT) are activation loop.

Belongs to the PI3/PI4-kinase family. Type III PI4K subfamily.

The protein localises to the cytoplasm. It catalyses the reaction a 1,2-diacyl-sn-glycero-3-phospho-(1D-myo-inositol) + ATP = a 1,2-diacyl-sn-glycero-3-phospho-(1D-myo-inositol 4-phosphate) + ADP + H(+). Functionally, acts on phosphatidylinositol (PI) in the first committed step in the production of the second messenger inositol 1,4,5,-trisphosphate. The polypeptide is Probable phosphatidylinositol 4-kinase STT4 homolog (STT4) (Encephalitozoon cuniculi (strain GB-M1) (Microsporidian parasite)).